Consider the following 542-residue polypeptide: Beta-amylase 2, chloroplastic (542 aa).

The N-terminal 55 residues, 1 to 55 (MAIRLNHSVIPVSVKLGAPTRVSARSSLPFSVGDWRGVSTFSGARPLVLAKVKLR), are a transit peptide targeting the chloroplast. D136, H176, and D184 together coordinate substrate. The active-site Proton donor is the E269. Residues K377, H382, and T424 each contribute to the substrate site. Catalysis depends on E465, which acts as the Proton acceptor. Substrate-binding positions include 466 to 467 (NA) and R501.

Belongs to the glycosyl hydrolase 14 family.

The protein resides in the plastid. Its subcellular location is the chloroplast. The catalysed reaction is Hydrolysis of (1-&gt;4)-alpha-D-glucosidic linkages in polysaccharides so as to remove successive maltose units from the non-reducing ends of the chains.. Redox regulation; active in reducing conditions, inactive in oxidizing conditions. Its function is as follows. Low beta-amylase activity. Interacts poorly with starch or other alpha-1,4-glucan. This is Beta-amylase 2, chloroplastic (BAM2) from Arabidopsis thaliana (Mouse-ear cress).